We begin with the raw amino-acid sequence, 502 residues long: Glycogen synthase 1 (502 aa).

K18 serves as a coordination point for ADP-alpha-D-glucose.

This sequence belongs to the glycosyltransferase 1 family. Bacterial/plant glycogen synthase subfamily.

The enzyme catalyses [(1-&gt;4)-alpha-D-glucosyl](n) + ADP-alpha-D-glucose = [(1-&gt;4)-alpha-D-glucosyl](n+1) + ADP + H(+). The protein operates within glycan biosynthesis; glycogen biosynthesis. Functionally, synthesizes alpha-1,4-glucan chains using ADP-glucose. The sequence is that of Glycogen synthase 1 from Geobacter metallireducens (strain ATCC 53774 / DSM 7210 / GS-15).